The primary structure comprises 413 residues: Putative syntaxin-5 (413 aa).

Over 1-391 the chain is Cytoplasmic; the sequence is MSDFHNIRSR…RYLQNISKNR (391 aa). Residues 257-290 form a disordered region; it reads KNRRDKFSSGAAVPMGLPSSSSGANVRSKLLQDD. In terms of domain architecture, t-SNARE coiled-coil homology spans 321 to 383; sequence LEYAQARSNT…DMAHSELVRY (63 aa). A helical; Anchor for type IV membrane protein membrane pass occupies residues 392 to 412; sequence WLMIQVFGVLMVFFVVFVLFL. A topological domain (extracellular) is located at residue Thr413.

It belongs to the syntaxin family.

It is found in the membrane. In terms of biological role, potentially involved in docking of synaptic vesicles at presynaptic active zones. This chain is Putative syntaxin-5 (syx-5), found in Caenorhabditis elegans.